The following is a 257-amino-acid chain: Imidazole glycerol phosphate synthase subunit HisF (257 aa).

Residues Asp-12 and Asp-131 contribute to the active site.

The protein belongs to the HisA/HisF family. As to quaternary structure, heterodimer of HisH and HisF.

It localises to the cytoplasm. It carries out the reaction 5-[(5-phospho-1-deoxy-D-ribulos-1-ylimino)methylamino]-1-(5-phospho-beta-D-ribosyl)imidazole-4-carboxamide + L-glutamine = D-erythro-1-(imidazol-4-yl)glycerol 3-phosphate + 5-amino-1-(5-phospho-beta-D-ribosyl)imidazole-4-carboxamide + L-glutamate + H(+). It functions in the pathway amino-acid biosynthesis; L-histidine biosynthesis; L-histidine from 5-phospho-alpha-D-ribose 1-diphosphate: step 5/9. Its function is as follows. IGPS catalyzes the conversion of PRFAR and glutamine to IGP, AICAR and glutamate. The HisF subunit catalyzes the cyclization activity that produces IGP and AICAR from PRFAR using the ammonia provided by the HisH subunit. This chain is Imidazole glycerol phosphate synthase subunit HisF, found in Rhodococcus jostii (strain RHA1).